The primary structure comprises 630 residues: METTPLNSQKVLSECKDREDCQENGVLQKGVPTTADRAEPSQISNGYSAVPSTSAGDEASHSIPAATTTLVAEIRQGERETWGKKMDFLLSVIGYAVDLGNIWRFPYICYQNGGGAFLLPYTIMAIFGGIPLFYMELALGQYHRNGCISIWRKICPIFKGIGYAICIIAFYIASYYNTIIAWALYYLISSLTDRLPWTSCTNSWNTGNCTNYFAQDNITWTLHSTSPAEEFYLRHVLQIHQSKGLQDLGTISWQLTLCIVLIFTVIYFSIWKGVKTSGKVVWVTATFPYIVLSVLLVRGATLPGAWRGVVFYLKPNWQKLLETGVWVDAAAQIFFSLGPGFGVLLAFASYNKFNNNCYQDALVTSVVNCMTSFVSGFVIFTVLGYMAEMRNEDVSEVAKDAGPSLLFITYAEAIANMPASTFFAIIFFLMLITLGLDSTFAGLEGVITAVLDEFPHIWAKRREWFVLIVVITCVLGSLLTLTSGGAYVVTLLEEYATGPAVLTVALIEAVAVSWFYGITQFCSDVKEMLGFSPGWFWRICWVAISPLFLLFIICSFLMSPPQLRLFQYNYPHWSIVLGYCIGMSSVICIPTYIIYRLISTPGTLKERIIKSITPETPTEIPCGDIRMNAV.

The Cytoplasmic segment spans residues Met1–Asp87. Residues Glu23–Ser60 form a disordered region. Residues Ser41–Ala55 show a composition bias toward polar residues. Position 47 is a phosphotyrosine (Tyr47). The chain crosses the membrane as a helical span at residues Phe88–Asn112. 5 residues coordinate Na(+): Gly94, Ala96, Val97, Asp98, and Asn101. Asp98 is a serotonin binding site. Topologically, residues Gly113 to Gly115 are extracellular. A helical membrane pass occupies residues Ala116 to Met135. Over Glu136–Gly160 the chain is Cytoplasmic. The residue at position 142 (Tyr142) is a Phosphotyrosine. A helical transmembrane segment spans residues Ile161 to Tyr186. The Extracellular segment spans residues Leu187–Ser252. A disulfide bridge links Cys200 with Cys209. Residues Asn208 and Asn217 are each glycosylated (N-linked (GlcNAc...) asparagine). Residues Trp253–Trp271 traverse the membrane as a helical segment. Over Lys272–Ser277 the chain is Cytoplasmic. Position 276 is a phosphothreonine (Thr276). The chain crosses the membrane as a helical span at residues Gly278–Val297. Over Arg298 to Gly324 the chain is Extracellular. A helical transmembrane segment spans residues Val325–Phe347. Ser336 serves as a coordination point for Na(+). At Ala348 to Asp360 the chain is on the cytoplasmic side. Residues Ala361–Phe380 traverse the membrane as a helical segment. Asn368 is a binding site for Na(+). Over Thr381–Thr421 the chain is Extracellular. The helical transmembrane segment at Phe422–Leu443 threads the bilayer. Na(+)-binding residues include Leu434, Asp437, and Ser438. Thr439 contacts serotonin. Residues Glu444–Glu463 are Cytoplasmic-facing. The helical transmembrane segment at Trp464–Ser483 threads the bilayer. The Extracellular segment spans residues Gly484–Glu494. Glu494 and Tyr495 together coordinate serotonin. The chain crosses the membrane as a helical span at residues Tyr495–Tyr516. Residues Gly517 to Arg538 are Cytoplasmic-facing. Residues Ile539–Met558 traverse the membrane as a helical segment. 2 residues coordinate serotonin: Phe556 and Ser559. Topologically, residues Ser559–Ser574 are extracellular. The chain crosses the membrane as a helical span at residues Ile575–Tyr595. Residues Arg596–Val630 lie on the Cytoplasmic side of the membrane. The interval Thr616–Asp624 is interaction with RAB4A.

The protein belongs to the sodium:neurotransmitter symporter (SNF) (TC 2.A.22) family. SLC6A4 subfamily. In terms of assembly, monomer or homooligomer. Interacts with TGFB1I1. Interacts with SEC23A, SEC24C and PATJ. Interacts with NOS1; the interaction may diminish the cell surface localization of SERT in the brain and, correspondingly, reduce serotonin reuptake. Interacts (via C-terminus) with SCAMP2; the interaction is direct and retains transporter molecules intracellularly. Interacts with filamentous actin and STX1A. Interacts (via the N-terminus) with STX1A (via the H3 domain); this interaction regulates SLC4A6 channel conductance. Interacts with ITGAV:ITGB3. Interacts (via C-terminus) with ITGB3; this interaction regulates SLC6A4 trafficking. Phosphorylation at Thr-276 increases 5-HT uptake and is required for cGMP-mediated SERT regulation. Expressed in the intestinal crypt epithelial cells and myenteric neurons of the small intestine (at protein level). Expressed in the brain.

It is found in the cell membrane. Its subcellular location is the endomembrane system. The protein resides in the endosome membrane. It localises to the synapse. The protein localises to the cell junction. It is found in the focal adhesion. Its subcellular location is the cell projection. The protein resides in the neuron projection. The enzyme catalyses serotonin(out) + K(+)(in) + Na(+)(out) + H(+)(in) = serotonin(in) + K(+)(out) + Na(+)(in) + H(+)(out). In terms of biological role, serotonin transporter that cotransports serotonin with one Na(+) ion in exchange for one K(+) ion and possibly one proton in an overall electroneutral transport cycle. Transports serotonin across the plasma membrane from the extracellular compartment to the cytosol thus limiting serotonin intercellular signaling. Essential for serotonin homeostasis in the central nervous system. In the developing somatosensory cortex, acts in glutamatergic neurons to control serotonin uptake and its trophic functions accounting for proper spatial organization of cortical neurons and elaboration of sensory circuits. In the mature cortex, acts primarily in brainstem raphe neurons to mediate serotonin uptake from the synaptic cleft back into the pre-synaptic terminal thus terminating serotonin signaling at the synapse. Modulates mucosal serotonin levels in the gastrointestinal tract through uptake and clearance of serotonin in enterocytes. Required for enteric neurogenesis and gastrointestinal reflexes. Regulates blood serotonin levels by ensuring rapid high affinity uptake of serotonin from plasma to platelets, where it is further stored in dense granules via vesicular monoamine transporters and then released upon stimulation. Mechanistically, the transport cycle starts with an outward-open conformation having Na1(+) and Cl(-) sites occupied. The binding of a second extracellular Na2(+) ion and serotonin substrate leads to structural changes to outward-occluded to inward-occluded to inward-open, where the Na2(+) ion and serotonin are released into the cytosol. Binding of intracellular K(+) ion induces conformational transitions to inward-occluded to outward-open and completes the cycle by releasing K(+) possibly together with a proton bound to Asp-98 into the extracellular compartment. Na1(+) and Cl(-) ions remain bound throughout the transport cycle. Additionally, displays serotonin-induced channel-like conductance for monovalent cations, mainly Na(+) ions. The channel activity is uncoupled from the transport cycle and may contribute to the membrane resting potential or excitability. This chain is Sodium-dependent serotonin transporter (Slc6a4), found in Rattus norvegicus (Rat).